A 1099-amino-acid polypeptide reads, in one-letter code: Ras-associating and dilute domain-containing protein (1099 aa).

The Ras-associating domain occupies 90-193 (APGVLKVFGD…RRFELRKKSD (104 aa)). Residues 221 to 265 (AKGTPALTSEAAQSSPPTRLRRTVSETSLSPAPSLPEAAQRPEEP) form a disordered region. The segment covering 226-237 (ALTSEAAQSSPP) has biased composition (polar residues). 4 positions are modified to phosphoserine: Ser-235, Ser-245, Ser-248, and Ser-250. Positions 302–377 (HTVGQRTPSS…LQHGDLLSLG (76 aa)) constitute an FHA domain. Phosphoserine is present on residues Ser-422 and Ser-432. Positions 525 to 792 (ADLVPDLQHI…PDGPEAFQSE (268 aa)) constitute a Dilute domain. The disordered stretch occupies residues 868 to 941 (GHGCPLANRD…STPLGLEPAG (74 aa)). Ser-915 is subject to Phosphoserine. Residues 916 to 927 (QAGSLHTDSSCM) are compositionally biased toward polar residues. The 86-residue stretch at 1000–1085 (MVELERGPSG…KMRFLVAKSD (86 aa)) folds into the PDZ domain.

The protein belongs to the RADIL family. In terms of assembly, interacts with RAP1A; in a GTP-dependent manner. Does not interact with members of the Ras family. Interacts (via PDZ domain) with KIF14; is recruited to the microtubule network restricting its interaction with activated RAP1A.

Its function is as follows. Downstream effector of Rap required for cell adhesion and migration of neural crest precursors during development. The sequence is that of Ras-associating and dilute domain-containing protein (Radil) from Mus musculus (Mouse).